The chain runs to 479 residues: Sulfate adenylyltransferase subunit 1 (479 aa).

The region spanning 25 to 239 (KSLLRFLTCG…EVLETVDIQR (215 aa)) is the tr-type G domain. The G1 stretch occupies residues 34-41 (GSVDDGKS). Residue 34–41 (GSVDDGKS) coordinates GTP. Residues 92 to 96 (GITID) are G2. Positions 113-116 (DTPG) are G3. GTP is bound by residues 113 to 117 (DTPGH) and 168 to 171 (NKMD). The segment at 168-171 (NKMD) is G4. Residues 206–208 (SAL) are G5.

It belongs to the TRAFAC class translation factor GTPase superfamily. Classic translation factor GTPase family. CysN/NodQ subfamily. Heterodimer composed of CysD, the smaller subunit, and CysN.

It carries out the reaction sulfate + ATP + H(+) = adenosine 5'-phosphosulfate + diphosphate. Its pathway is sulfur metabolism; hydrogen sulfide biosynthesis; sulfite from sulfate: step 1/3. In terms of biological role, with CysD forms the ATP sulfurylase (ATPS) that catalyzes the adenylation of sulfate producing adenosine 5'-phosphosulfate (APS) and diphosphate, the first enzymatic step in sulfur assimilation pathway. APS synthesis involves the formation of a high-energy phosphoric-sulfuric acid anhydride bond driven by GTP hydrolysis by CysN coupled to ATP hydrolysis by CysD. This chain is Sulfate adenylyltransferase subunit 1, found in Salmonella heidelberg (strain SL476).